We begin with the raw amino-acid sequence, 217 residues long: Adenosylcobinamide-GDP ribazoletransferase (217 aa).

A run of 5 helical transmembrane segments spans residues 6 to 26, 39 to 61, 95 to 115, 116 to 136, and 162 to 182; these read ALLS…FKCA, GPAA…LLLM, GTGG…STAS, PLQL…VAAF, and ALAV…AVAL.

This sequence belongs to the CobS family. Mg(2+) serves as cofactor.

The protein localises to the cell membrane. It catalyses the reaction alpha-ribazole + adenosylcob(III)inamide-GDP = adenosylcob(III)alamin + GMP + H(+). The catalysed reaction is alpha-ribazole 5'-phosphate + adenosylcob(III)inamide-GDP = adenosylcob(III)alamin 5'-phosphate + GMP + H(+). The protein operates within cofactor biosynthesis; adenosylcobalamin biosynthesis; adenosylcobalamin from cob(II)yrinate a,c-diamide: step 7/7. In terms of biological role, joins adenosylcobinamide-GDP and alpha-ribazole to generate adenosylcobalamin (Ado-cobalamin). Also synthesizes adenosylcobalamin 5'-phosphate from adenosylcobinamide-GDP and alpha-ribazole 5'-phosphate. The sequence is that of Adenosylcobinamide-GDP ribazoletransferase from Pyrobaculum calidifontis (strain DSM 21063 / JCM 11548 / VA1).